A 226-amino-acid polypeptide reads, in one-letter code: Neuron-specific vesicular protein calcyon (226 aa).

Residues 1 to 23 (MVKLGCSFSGKPGKETGDQDGAA) are disordered. Residues 1 to 88 (MVKLGCSFSG…EEGRRLPTAR (88 aa)) lie on the Extracellular side of the membrane. Residues 89–109 (MIAFAMALLGCVLIMYKAIWY) form a helical membrane-spanning segment. Residues 110 to 226 (DQFTCPDGFL…AEDVPSQSPK (117 aa)) lie on the Cytoplasmic side of the membrane. Residues 189–226 (TAAAAAAAEGNEPSGKPLDMREKEDPQKAEDVPSQSPK) are disordered. Over residues 206–219 (LDMREKEDPQKAED) the composition is skewed to basic and acidic residues.

The protein belongs to the NSG family. In terms of assembly, interacts with CLTA. Expressed exclusively in neurons (at protein level). In all age groups, expressed at significantly higher levels in the medial prefrontal and orbital frontal cortices of spontaneously hypertensive rats (SHR), a model of attention deficit-hyperactivity disorder, than Wistar Kyoto (WKY) animals. In the motor cortex, dorsal striatum and nucleus accumbens, expression is significantly elevated in SHR only in younger animals.

Its subcellular location is the cytoplasmic vesicle membrane. The protein resides in the cell membrane. Its function is as follows. Interacts with clathrin light chain A and stimulates clathrin self-assembly and clathrin-mediated endocytosis. In Rattus norvegicus (Rat), this protein is Neuron-specific vesicular protein calcyon (Caly).